Consider the following 224-residue polypeptide: Small ribosomal subunit protein uS3 (224 aa).

In terms of domain architecture, KH type-2 spans 39-107 (IREFLKKKPS…DVWVEIAEVK (69 aa)).

The protein belongs to the universal ribosomal protein uS3 family. As to quaternary structure, part of the 30S ribosomal subunit. Forms a tight complex with proteins S10 and S14.

In terms of biological role, binds the lower part of the 30S subunit head. Binds mRNA in the 70S ribosome, positioning it for translation. The protein is Small ribosomal subunit protein uS3 of Chlamydia trachomatis serovar D (strain ATCC VR-885 / DSM 19411 / UW-3/Cx).